Consider the following 522-residue polypeptide: Putative cysteine ligase BshC (522 aa).

The stretch at 436-469 forms a coiled coil; the sequence is SWAQAEKAKALKQLEDIEKKLRKAEERKHDDVIK.

Belongs to the BshC family.

This Cytophaga hutchinsonii (strain ATCC 33406 / DSM 1761 / CIP 103989 / NBRC 15051 / NCIMB 9469 / D465) protein is Putative cysteine ligase BshC.